A 123-amino-acid polypeptide reads, in one-letter code: Cliotide T4 (123 aa).

A signal peptide spans 1 to 28; it reads MASLRIAPLALFFFLAASVMFTVEKTEA. The segment at residues 29-58 is a cross-link (cyclopeptide (Gly-Asn)); that stretch reads GIPCGESCVFIPCITAAIGCSCKSKVCYRN. 3 disulfide bridges follow: cysteine 32-cysteine 48, cysteine 36-cysteine 50, and cysteine 41-cysteine 55. Residues 59-123 constitute a propeptide, removed in mature form; the sequence is HVIAAEAKTM…KDHLKMSITN (65 aa).

In terms of processing, contains 3 disulfide bonds. Post-translationally, this is a cyclic peptide. In terms of tissue distribution, expressed in flower, stem, shoot, root, leaf, seed, pod and nodule (at protein level).

In terms of biological role, probably participates in a plant defense mechanism. Active against Gram-negative bacteria E.coli ATCC 700926 (MIC=1.0 uM), K.pneumoniae ATTC 13883 (MIC=5.5 uM) and P.aeruginosa ATCC 39018 (MIC=7.5 uM). Has hemolytic and cytotoxic activity. The polypeptide is Cliotide T4 (Clitoria ternatea (Butterfly pea)).